Consider the following 422-residue polypeptide: Tyrosine--tRNA ligase (422 aa).

Tyrosine 35 is an L-tyrosine binding site. The 'HIGH' region motif lies at 40–49 (PTAASLHVGH). 2 residues coordinate L-tyrosine: tyrosine 169 and glutamine 173. Residues 229-233 (KFGKT) carry the 'KMSKS' region motif. Lysine 232 contributes to the ATP binding site. An S4 RNA-binding domain is found at 352-418 (VRLAQLFADT…GKKSLASVAV (67 aa)).

It belongs to the class-I aminoacyl-tRNA synthetase family. TyrS type 1 subfamily. Homodimer.

The protein resides in the cytoplasm. The catalysed reaction is tRNA(Tyr) + L-tyrosine + ATP = L-tyrosyl-tRNA(Tyr) + AMP + diphosphate + H(+). Its function is as follows. Catalyzes the attachment of tyrosine to tRNA(Tyr) in a two-step reaction: tyrosine is first activated by ATP to form Tyr-AMP and then transferred to the acceptor end of tRNA(Tyr). The sequence is that of Tyrosine--tRNA ligase from Kineococcus radiotolerans (strain ATCC BAA-149 / DSM 14245 / SRS30216).